Here is a 394-residue protein sequence, read N- to C-terminus: V-type proton ATPase subunit C (394 aa).

At S17 the chain carries Phosphoserine.

It belongs to the V-ATPase C subunit family. As to quaternary structure, V-ATPase is a heteromultimeric enzyme composed of a peripheral catalytic V1 complex (components A to H) attached to an integral membrane V0 proton pore complex (components: a, c, c', c'', d, e, f and VOA1).

The protein resides in the cytoplasm. It is found in the vacuole membrane. Its function is as follows. Subunit of the V1 complex of vacuolar(H+)-ATPase (V-ATPase), a multisubunit enzyme composed of a peripheral complex (V1) that hydrolyzes ATP and a membrane integral complex (V0) that translocates protons. V-ATPase is responsible for acidifying and maintaining the pH of intracellular compartments. Subunit C is necessary for the assembly of the catalytic sector of the enzyme and is likely to have a specific function in its catalytic activity. Reversibly leaves the enzyme after glucose depletion, causing the catalytic subcomplex V1 to detach from the V0 section. This Schizosaccharomyces pombe (strain 972 / ATCC 24843) (Fission yeast) protein is V-type proton ATPase subunit C.